Consider the following 264-residue polypeptide: Thymidylate synthase (264 aa).

Residue Arg-21 coordinates dUMP. Residue His-51 coordinates (6R)-5,10-methylene-5,6,7,8-tetrahydrofolate. 126–127 (RR) lines the dUMP pocket. Cys-146 (nucleophile) is an active-site residue. DUMP-binding positions include 166 to 169 (RSCD), Asn-177, and 207 to 209 (HLY). Asp-169 contacts (6R)-5,10-methylene-5,6,7,8-tetrahydrofolate. Ala-263 is a (6R)-5,10-methylene-5,6,7,8-tetrahydrofolate binding site.

The protein belongs to the thymidylate synthase family. Bacterial-type ThyA subfamily. Homodimer.

Its subcellular location is the cytoplasm. The enzyme catalyses dUMP + (6R)-5,10-methylene-5,6,7,8-tetrahydrofolate = 7,8-dihydrofolate + dTMP. It participates in pyrimidine metabolism; dTTP biosynthesis. In terms of biological role, catalyzes the reductive methylation of 2'-deoxyuridine-5'-monophosphate (dUMP) to 2'-deoxythymidine-5'-monophosphate (dTMP) while utilizing 5,10-methylenetetrahydrofolate (mTHF) as the methyl donor and reductant in the reaction, yielding dihydrofolate (DHF) as a by-product. This enzymatic reaction provides an intracellular de novo source of dTMP, an essential precursor for DNA biosynthesis. The sequence is that of Thymidylate synthase from Cronobacter sakazakii (strain ATCC BAA-894) (Enterobacter sakazakii).